Consider the following 341-residue polypeptide: Anthranilate phosphoribosyltransferase (341 aa).

Residues Gly80, 83–84, Thr88, 90–93, 108–116, and Ser120 contribute to the 5-phospho-alpha-D-ribose 1-diphosphate site; these read GD, NIST, and KHGNRAVSS. Gly80 contributes to the anthranilate binding site. Ser92 contributes to the Mg(2+) binding site. Asn111 provides a ligand contact to anthranilate. Arg166 provides a ligand contact to anthranilate. Positions 225 and 226 each coordinate Mg(2+).

The protein belongs to the anthranilate phosphoribosyltransferase family. As to quaternary structure, homodimer. The cofactor is Mg(2+).

The enzyme catalyses N-(5-phospho-beta-D-ribosyl)anthranilate + diphosphate = 5-phospho-alpha-D-ribose 1-diphosphate + anthranilate. Its pathway is amino-acid biosynthesis; L-tryptophan biosynthesis; L-tryptophan from chorismate: step 2/5. Catalyzes the transfer of the phosphoribosyl group of 5-phosphorylribose-1-pyrophosphate (PRPP) to anthranilate to yield N-(5'-phosphoribosyl)-anthranilate (PRA). This is Anthranilate phosphoribosyltransferase from Brevibacillus brevis (strain 47 / JCM 6285 / NBRC 100599).